The sequence spans 845 residues: Putative DEAD-box ATP-dependent RNA helicase 33 (845 aa).

2 disordered regions span residues 129 to 149 and 282 to 302; these read GHPD…PMSP and KFRK…NEGK. Over residues 289–298 the composition is skewed to acidic residues; sequence STEEDSDEEG. The short motif at 375 to 403 is the Q motif element; that stretch reads KRFDESCISPLTLKALSASGIVKMTRVQD. Residues 406 to 590 form the Helicase ATP-binding domain; it reads LSECLDGKDA…QLVLKRDHSY (185 aa). Position 419–426 (419–426) interacts with ATP; sequence AKTGTGKS. A DEAD box motif is present at residues 538 to 541; the sequence is DEAD. Residues 624-778 form the Helicase C-terminal domain; the sequence is LLKEHINNMP…QVDQSMAKID (155 aa).

The protein belongs to the DEAD box helicase family.

It catalyses the reaction ATP + H2O = ADP + phosphate + H(+). The sequence is that of Putative DEAD-box ATP-dependent RNA helicase 33 (RH33) from Arabidopsis thaliana (Mouse-ear cress).